The chain runs to 193 residues: dCTP deaminase, dUMP-forming (193 aa).

DCTP contacts are provided by residues 101–106 (KSSLGR), aspartate 119, 127–129 (TLE), glutamine 148, tyrosine 162, and glutamine 174. The active-site Proton donor/acceptor is the glutamate 129. The segment at 160 to 193 (TPYGSGSLGSKYQGQRGPTPSKGYLNFSSEQDSD) is disordered. A compositionally biased stretch (polar residues) spans 167–177 (LGSKYQGQRGP).

This sequence belongs to the dCTP deaminase family. In terms of assembly, homotrimer.

The catalysed reaction is dCTP + 2 H2O = dUMP + NH4(+) + diphosphate. The protein operates within pyrimidine metabolism; dUMP biosynthesis; dUMP from dCTP: step 1/1. Its function is as follows. Bifunctional enzyme that catalyzes both the deamination of dCTP to dUTP and the hydrolysis of dUTP to dUMP without releasing the toxic dUTP intermediate. The sequence is that of dCTP deaminase, dUMP-forming from Corynebacterium efficiens (strain DSM 44549 / YS-314 / AJ 12310 / JCM 11189 / NBRC 100395).